Reading from the N-terminus, the 265-residue chain is Hydroxyethylthiazole kinase (265 aa).

A substrate-binding site is contributed by M43. 2 residues coordinate ATP: K118 and T165. Position 192 (G192) interacts with substrate.

This sequence belongs to the Thz kinase family. Mg(2+) serves as cofactor.

The catalysed reaction is 5-(2-hydroxyethyl)-4-methylthiazole + ATP = 4-methyl-5-(2-phosphooxyethyl)-thiazole + ADP + H(+). Its pathway is cofactor biosynthesis; thiamine diphosphate biosynthesis; 4-methyl-5-(2-phosphoethyl)-thiazole from 5-(2-hydroxyethyl)-4-methylthiazole: step 1/1. Functionally, catalyzes the phosphorylation of the hydroxyl group of 4-methyl-5-beta-hydroxyethylthiazole (THZ). The polypeptide is Hydroxyethylthiazole kinase (Pyrococcus horikoshii (strain ATCC 700860 / DSM 12428 / JCM 9974 / NBRC 100139 / OT-3)).